Consider the following 701-residue polypeptide: Alpha-1,4-glucan:maltose-1-phosphate maltosyltransferase (701 aa).

The disordered stretch occupies residues 286–317 (HRKGRNNSPTAAPTDVGSPWAIGSDEGGHDTV). Positions 288, 348, and 383 each coordinate alpha-maltose 1-phosphate. Asp418 (nucleophile) is an active-site residue. An alpha-maltose 1-phosphate-binding site is contributed by Asn419. Residue Glu447 is the Proton donor of the active site. 557–558 (KY) contributes to the alpha-maltose 1-phosphate binding site.

Belongs to the glycosyl hydrolase 13 family. GlgE subfamily. As to quaternary structure, homodimer.

It carries out the reaction alpha-maltose 1-phosphate + [(1-&gt;4)-alpha-D-glucosyl](n) = [(1-&gt;4)-alpha-D-glucosyl](n+2) + phosphate. It participates in glycan biosynthesis; glycogen biosynthesis. Functionally, essential maltosyltransferase that uses maltose 1-phosphate (M1P) as the sugar donor to elongate linear or branched alpha-(1-&gt;4)-glucans. Maltooligosaccharides with a degree of polymerization (DP) superior or equal to 4 are efficient acceptors, with DP5 being optimal in the GlgE-catalyzed polymerization with M1P. Is specific for the alpha-anomer of M1P as substrate, since the beta-anomer of M1P gives no activity. Exhibits an alpha-retaining catalytic mechanism. Is also able to catalyze the reverse reaction in vitro, releasing M1P from glycogen in the presence of inorganic phosphate. Also catalyzes disproportionation reactions through maltosyl transfer between maltooligosaccharides. Is involved in a branched alpha-glucan biosynthetic pathway from trehalose, together with TreS, Mak and GlgB. The polypeptide is Alpha-1,4-glucan:maltose-1-phosphate maltosyltransferase (glgE) (Mycobacterium tuberculosis (strain CDC 1551 / Oshkosh)).